Here is a 29-residue protein sequence, read N- to C-terminus: Cytochrome b6-f complex subunit 8 (29 aa).

Residues 3–23 traverse the membrane as a helical segment; the sequence is IVSIAWAALMVVFTFSLSLVV.

Belongs to the PetN family. As to quaternary structure, the 4 large subunits of the cytochrome b6-f complex are cytochrome b6, subunit IV (17 kDa polypeptide, PetD), cytochrome f and the Rieske protein, while the 4 small subunits are PetG, PetL, PetM and PetN. The complex functions as a dimer.

It is found in the plastid. The protein resides in the chloroplast thylakoid membrane. Component of the cytochrome b6-f complex, which mediates electron transfer between photosystem II (PSII) and photosystem I (PSI), cyclic electron flow around PSI, and state transitions. The protein is Cytochrome b6-f complex subunit 8 of Angiopteris evecta (Mule's foot fern).